We begin with the raw amino-acid sequence, 263 residues long: MFTLAHHRHAIRKPMAEFFGVALLVIFGAGAACQVVLSTNPNSFLSINFGWAIGIAMGAWISGSISGGHINPAITIAMATYRGFPWREVPSYILAQVLGGVVGAALVYANYIHAIDVFEGGRHIRTQATASLFATYALPYMTQVSCFFSEFLATAVLAMMVLALTDNRNGAPTNGLSPFALFVLFIGLGASLGMETAYALNPARDFGPRLFLAMAGYGKALFNYRSQYWLWAPIIAPVLGAQAGGLLYDTFLYDGDDSPIKWR.

Topologically, residues 1-17 (MFTLAHHRHAIRKPMAE) are cytoplasmic. The helical transmembrane segment at 18–38 (FFGVALLVIFGAGAACQVVLS) threads the bilayer. The Extracellular segment spans residues 39–44 (TNPNSF). Residues 45 to 65 (LSINFGWAIGIAMGAWISGSI) form a helical membrane-spanning segment. At 66-88 (SGGHINPAITIAMATYRGFPWRE) the chain is on the cytoplasmic side. The short motif at 71 to 73 (NPA) is the NPA 1 element. A helical transmembrane segment spans residues 89–109 (VPSYILAQVLGGVVGAALVYA). The Extracellular portion of the chain corresponds to 110–143 (NYIHAIDVFEGGRHIRTQATASLFATYALPYMTQ). Residues 144–164 (VSCFFSEFLATAVLAMMVLAL) traverse the membrane as a helical segment. The Cytoplasmic segment spans residues 165–174 (TDNRNGAPTN). Residues 175 to 195 (GLSPFALFVLFIGLGASLGME) traverse the membrane as a helical segment. Topologically, residues 196–227 (TAYALNPARDFGPRLFLAMAGYGKALFNYRSQ) are extracellular. The NPA 2 motif lies at 201–203 (NPA). Residues 228–248 (YWLWAPIIAPVLGAQAGGLLY) form a helical membrane-spanning segment. Residues 249–263 (DTFLYDGDDSPIKWR) are Cytoplasmic-facing.

The protein belongs to the MIP/aquaporin (TC 1.A.8) family.

The protein localises to the membrane. The catalysed reaction is H2O(in) = H2O(out). Its function is as follows. Probable water channel required to facilitate the transport of water across membranes. The polypeptide is Aquaporin Lacbi1:233199 (Laccaria bicolor (strain S238N-H82 / ATCC MYA-4686) (Bicoloured deceiver)).